The primary structure comprises 116 residues: Hydrogenase maturation factor HypA (116 aa).

Residue His2 coordinates Ni(2+). The Zn(2+) site is built by Cys73, Cys76, Cys89, and Cys92.

Belongs to the HypA/HybF family.

Its function is as follows. Involved in the maturation of [NiFe] hydrogenases. Required for nickel insertion into the metal center of the hydrogenase. The sequence is that of Hydrogenase maturation factor HypA from Chlorobium limicola (strain DSM 245 / NBRC 103803 / 6330).